A 499-amino-acid chain; its full sequence is Glucooligosaccharide oxidase (499 aa).

The first 25 residues, 1 to 25 (MVRIQELTAALSLASVVQASWIQKR), serve as a signal peptide directing secretion. The cysteines at positions 31 and 80 are disulfide-linked. Positions 58–230 (VDYDPAAIAI…SEFEFNTFEA (173 aa)) constitute an FAD-binding PCMH-type domain. A cross-link (6-(S-cysteinyl)-8alpha-(pros-histidyl)-FAD (His-Cys)) is located at residues 95–155 (HSYGSYGFGG…GNRALSHGTC (61 aa)). Substrate-binding residues include Tyr97, Thr154, and Arg270. N-linked (GlcNAc...) asparagine glycosylation is found at Asn330 and Asn366. The substrate site is built by Gln378 and Gln409. The N-linked (GlcNAc...) asparagine glycan is linked to Asn419. Tyr454 lines the substrate pocket. The Proton acceptor role is filled by Tyr454.

The protein belongs to the oxygen-dependent FAD-linked oxidoreductase family. It depends on FAD as a cofactor. The FAD cofactor is bound via a bicovalent 6-S-cysteinyl, 8alpha-N1-histidyl FAD linkage.

The protein resides in the secreted. The enzyme catalyses beta-lactose + O2 = lactobiono-1,5-lactone + H2O2. The catalysed reaction is D-cellobiose + O2 = D-cellobiono-1,5-lactone + H2O2. It catalyses the reaction D-cellotriose + O2 = D-cellotriono-1,5-lactone + H2O2. It carries out the reaction D-cellotetraose + O2 = D-cellotetraono-1,5-lactone + H2O2. The enzyme catalyses D-cellopentaose + O2 = D-cellopentaono-1,5-lactone + H2O2. The catalysed reaction is D-cellohexaose + O2 = D-cellohexaono-1,5-lactone + H2O2. Catalyzes the selective oxidation of C1 hydroxyl moieties on mono- and disaccharides with concomitant reduction of molecular oxygen to hydrogen peroxide. This results in the formation of the corresponding lactones, which typically undergo spontaneous hydrolysis. Glucooligosaccharide oxidase is able to oxidize the monosaccharide D-glucose as well as the disaccharides maltose, cellobiose, and lactose. In addition, it shows high selectivity for cello- and maltooligosaccharides, indicating that glucooligosaccharide oxidase prefers oligosaccharides with a beta-D-glucosyl unit on the reducing end and additional sugar units linked by alpha- or beta-1,4 glucosidic bonds. This chain is Glucooligosaccharide oxidase (gluO), found in Sarocladium strictum (Black bundle disease fungus).